Consider the following 375-residue polypeptide: Chaperone protein DnaJ (375 aa).

The region spanning 5-70 (DYYEVLGVAR…NKRRAYDAHG (66 aa)) is the J domain. A CR-type zinc finger spans residues 131–208 (GIERRIEIPT…CHGAGRVEED (78 aa)). Residues C144, C147, C160, C163, C182, C185, C196, and C199 each contribute to the Zn(2+) site. CXXCXGXG motif repeat units follow at residues 144–151 (CAPCHGSG), 160–167 (CGTCHGRG), 182–189 (CPHCDGRG), and 196–203 (CKTCHGAG).

Belongs to the DnaJ family. Homodimer. The cofactor is Zn(2+).

The protein resides in the cytoplasm. Its function is as follows. Participates actively in the response to hyperosmotic and heat shock by preventing the aggregation of stress-denatured proteins and by disaggregating proteins, also in an autonomous, DnaK-independent fashion. Unfolded proteins bind initially to DnaJ; upon interaction with the DnaJ-bound protein, DnaK hydrolyzes its bound ATP, resulting in the formation of a stable complex. GrpE releases ADP from DnaK; ATP binding to DnaK triggers the release of the substrate protein, thus completing the reaction cycle. Several rounds of ATP-dependent interactions between DnaJ, DnaK and GrpE are required for fully efficient folding. Also involved, together with DnaK and GrpE, in the DNA replication of plasmids through activation of initiation proteins. This chain is Chaperone protein DnaJ, found in Xanthomonas axonopodis pv. citri (strain 306).